A 341-amino-acid chain; its full sequence is 4-hydroxythreonine-4-phosphate dehydrogenase (341 aa).

A substrate-binding site is contributed by Thr126. Residues His161, His206, and His272 each coordinate a divalent metal cation. Positions 280, 289, and 298 each coordinate substrate.

It belongs to the PdxA family. Homodimer. It depends on a divalent metal cation as a cofactor.

It is found in the cytoplasm. It carries out the reaction 4-(phosphooxy)-L-threonine + NAD(+) = 3-amino-2-oxopropyl phosphate + CO2 + NADH. It functions in the pathway cofactor biosynthesis; pyridoxine 5'-phosphate biosynthesis; pyridoxine 5'-phosphate from D-erythrose 4-phosphate: step 4/5. Functionally, catalyzes the NAD(P)-dependent oxidation of 4-(phosphooxy)-L-threonine (HTP) into 2-amino-3-oxo-4-(phosphooxy)butyric acid which spontaneously decarboxylates to form 3-amino-2-oxopropyl phosphate (AHAP). This chain is 4-hydroxythreonine-4-phosphate dehydrogenase, found in Thermosynechococcus vestitus (strain NIES-2133 / IAM M-273 / BP-1).